Reading from the N-terminus, the 375-residue chain is MENFPTEYFLNTSVRLLEYIRYRDSNYTREERIENLHYAYNKAAHHFAQPRQQKMLKVDPKRLQASLQTIVGMVVYSWAKVSKECMADLSIHYTYTLVLDDSSDDPHPAMVNYFDDLQAGREQAHPWWALVNEHFPNVLRHFGPFCSLNLIRSTMDFFEGCWIEQYNFGGFPGSDDYPQFLRRMNGLGHCVGASLWPKDLFDERKNFLEITTAVAQMENWMVWVNDLMSFYKEFDDERDQISLVKNFVTCHEITLDEALEKLTQETLHSSKQMVAVFADKDPQVMDTIECFMHGYVTWHLCDARYRLHEIYEKVKDQDTEDAKKFCKFFEQAANVGAVAASEWAYPPVAQLASVRAKSDVKEAQKPFLSSIELVE.

It belongs to the trichodiene synthase family.

It carries out the reaction (2E,6E)-farnesyl diphosphate = trichodiene + diphosphate. It participates in sesquiterpene biosynthesis; trichothecene biosynthesis. Functionally, TS is a member of the terpene cyclase group of enzymes. It catalyzes the isomerization and cyclization of farnesyl pyro-phosphate to form trichodiene, the first cyclic intermediate in the biosynthetic pathway for trichothecenes. It serves to branch trichothecene biosynthesis from the isoprenoid pathway. This is Trichodiene synthase (TRI5) from Fusarium cortaderiae.